A 546-amino-acid polypeptide reads, in one-letter code: Cytochrome P450 monooxygenase 219 (546 aa).

Positions 1-22 (MATLIVLLYGLLAFGTVWLVRR) are cleaved as a signal peptide. 2 N-linked (GlcNAc...) asparagine glycosylation sites follow: asparagine 367 and asparagine 441. Cysteine 487 contributes to the heme binding site.

The protein belongs to the cytochrome P450 family. Heme is required as a cofactor.

It participates in secondary metabolite biosynthesis. Functionally, cytochrome P450 monooxygenase that is able to use testosterone, anthracene, carbazole, pyrene, phenanthrene and trans-stilbene as substrates for oxidation. These multifunctional properties against a series of polycyclic aromatic hydrocarbons (PAHs) suggest that CYP219 would play important roles, at least in part, in fungal metabolic systems involved in xenobiotic detoxification. In Postia placenta (strain ATCC 44394 / Madison 698-R) (Brown rot fungus), this protein is Cytochrome P450 monooxygenase 219.